The primary structure comprises 120 residues: Glutamate--tRNA ligase (120 aa).

This sequence belongs to the class-I aminoacyl-tRNA synthetase family. Glutamate--tRNA ligase type 1 subfamily. In terms of assembly, monomer.

Its subcellular location is the cytoplasm. The enzyme catalyses tRNA(Glu) + L-glutamate + ATP = L-glutamyl-tRNA(Glu) + AMP + diphosphate. Functionally, catalyzes the attachment of glutamate to tRNA(Glu) in a two-step reaction: glutamate is first activated by ATP to form Glu-AMP and then transferred to the acceptor end of tRNA(Glu). The polypeptide is Glutamate--tRNA ligase (gltX) (Staphylococcus xylosus).